The sequence spans 301 residues: Protein FAM221A (301 aa).

The tract at residues 235–271 (MHAPSTSSPQPLAGGNEVGPSTQLSSLRKPEEDDMAY) is disordered.

Belongs to the FAM221 family.

This is Protein FAM221A (Fam221a) from Mus musculus (Mouse).